A 228-amino-acid polypeptide reads, in one-letter code: PKHD-type hydroxylase xcc-b100_1388 (228 aa).

The Fe2OG dioxygenase domain occupies R78–S180. Residues H96, D98, and H161 each contribute to the Fe cation site. Position 171 (R171) interacts with 2-oxoglutarate.

It depends on Fe(2+) as a cofactor. L-ascorbate serves as cofactor.

This is PKHD-type hydroxylase xcc-b100_1388 from Xanthomonas campestris pv. campestris (strain B100).